The following is a 362-amino-acid chain: Lactosylceramide alpha-2,3-sialyltransferase (362 aa).

Residues 1–5 (MRRPS) lie on the Cytoplasmic side of the membrane. The helical; Signal-anchor for type II membrane protein transmembrane segment at 6–26 (LLLKDILKCTLLVFGVWILYI) threads the bilayer. Residues 27-362 (LKLNYTTEEC…DLSGGIDREF (336 aa)) are Lumenal-facing. Asn30, Asn180, Asn224, and Asn334 each carry an N-linked (GlcNAc...) asparagine glycan. Cysteines 139 and 297 form a disulfide.

It belongs to the glycosyltransferase 29 family.

It is found in the golgi apparatus membrane. The enzyme catalyses a beta-D-Gal-(1-&gt;4)-beta-D-Glc-(1&lt;-&gt;1)-Cer(d18:1(4E)) + CMP-N-acetyl-beta-neuraminate = a ganglioside GM3 (d18:1(4E)) + CMP + H(+). It carries out the reaction ganglioside GA2 (d18:1(4E)/18:0) + CMP-N-acetyl-beta-neuraminate = ganglioside GM2 (d18:1(4E)/18:0) + CMP + H(+). It catalyses the reaction a beta-D-Gal-(1&lt;-&gt;1')-ceramide + CMP-N-acetyl-beta-neuraminate = N-acetyl-alpha-neuraminosyl-(2-&gt;3)-beta-D-galactosyl-(1&lt;-&gt;1')-ceramide + CMP + H(+). The catalysed reaction is ganglioside GA1 (d18:1(4E)/18:0) + CMP-N-acetyl-beta-neuraminate = ganglioside GM1 (d18:1(4E)/18:0) + CMP + H(+). In terms of biological role, transfers the sialyl group (N-acetyl-alpha-neuraminyl or NeuAc) from CMP-NeuAc to the non-reducing terminal galactose (Gal) of glycosphingolipids forming gangliosides (important molecules involved in the regulation of multiple cellular processes, including cell proliferation and differentiation, apoptosis, embryogenesis, development, and oncogenesis). Mainly involved in the biosynthesis of ganglioside GM3 but can also use different glycolipids as substrate acceptors such as D-galactosylceramide (GalCer), asialo-GM2 (GA2) and asialo-GM1 (GA1), although less preferentially than beta-D-Gal-(1-&gt;4)-beta-D-Glc-(1&lt;-&gt;1)-Cer (LacCer). In Pan troglodytes (Chimpanzee), this protein is Lactosylceramide alpha-2,3-sialyltransferase (ST3GAL5).